The chain runs to 283 residues: Methylamine utilization ferredoxin-type protein MauN (283 aa).

4Fe-4S ferredoxin-type domains follow at residues 217–248 (VRVSARNRDACDNCGACFSTCPEPHVIVPALK) and 251–280 (GSPLILSGDCINCGGCIDSCPNRVFAMASR). 8 residues coordinate [4Fe-4S] cluster: Cys-227, Cys-230, Cys-233, Cys-237, Cys-260, Cys-263, Cys-266, and Cys-270.

It participates in one-carbon metabolism; methylamine degradation. In terms of biological role, involved in electron transfer. This is Methylamine utilization ferredoxin-type protein MauN (mauN) from Paracoccus denitrificans (strain Pd 1222).